A 97-amino-acid polypeptide reads, in one-letter code: Co-chaperonin GroES (97 aa).

It belongs to the GroES chaperonin family. Heptamer of 7 subunits arranged in a ring. Interacts with the chaperonin GroEL.

Its subcellular location is the cytoplasm. In terms of biological role, together with the chaperonin GroEL, plays an essential role in assisting protein folding. The GroEL-GroES system forms a nano-cage that allows encapsulation of the non-native substrate proteins and provides a physical environment optimized to promote and accelerate protein folding. GroES binds to the apical surface of the GroEL ring, thereby capping the opening of the GroEL channel. This Tolumonas auensis (strain DSM 9187 / NBRC 110442 / TA 4) protein is Co-chaperonin GroES.